A 603-amino-acid chain; its full sequence is ATP-dependent zinc metalloprotease FtsH (603 aa).

The Stromal segment spans residues 1–2 (MK). A helical transmembrane segment spans residues 3–23 (NLWIWSLPLIVLAFIGWQELA). The Lumenal segment spans residues 24–101 (NQMPVATSRM…DVDVHAVSNW (78 aa)). Residues 102-122 (INVASNWIIPLIIIGVVIWLL) traverse the membrane as a helical segment. Over 123–603 (SRSASSNTTG…SQAARLTAVN (481 aa)) the chain is Stromal. Residue 194 to 201 (GPPGTGKT) participates in ATP binding. His415 contributes to the Zn(2+) binding site. Glu416 is an active-site residue. Residues His419 and Asp493 each contribute to the Zn(2+) site.

The protein in the central section; belongs to the AAA ATPase family. In the C-terminal section; belongs to the peptidase M41 family. In terms of assembly, homohexamer. Requires Zn(2+) as cofactor.

It localises to the plastid. The protein localises to the chloroplast thylakoid membrane. Functionally, acts as a processive, ATP-dependent zinc metallopeptidase. The sequence is that of ATP-dependent zinc metalloprotease FtsH from Cyanidioschyzon merolae (strain NIES-3377 / 10D) (Unicellular red alga).